The sequence spans 863 residues: Oleate activated transcription factor 3 (863 aa).

A DNA-binding region (zn(2)-C6 fungal-type) is located at residues 19-47 (CTNCKKRKSKCDRTKPCGTCVRLGDVDSC). Over residues 52 to 63 (DSSGQPESSPSL) the composition is skewed to polar residues. The segment at 52-99 (DSSGQPESSPSLNDADPLRKQSTPAERISPGFIKKRRSSQTRQDEDHW) is disordered.

This sequence belongs to the OAF3 family.

Its subcellular location is the cytoplasm. It is found in the nucleus. The protein resides in the mitochondrion. Functionally, transcriptional inhibitor with a significantly increased number of target genes in response to oleate. This Saccharomyces cerevisiae (strain YJM789) (Baker's yeast) protein is Oleate activated transcription factor 3 (OAF3).